We begin with the raw amino-acid sequence, 179 residues long: Large ribosomal subunit protein uL5 (179 aa).

The protein belongs to the universal ribosomal protein uL5 family. In terms of assembly, part of the 50S ribosomal subunit; part of the 5S rRNA/L5/L18/L25 subcomplex. Contacts the 5S rRNA and the P site tRNA. Forms a bridge to the 30S subunit in the 70S ribosome.

Its function is as follows. This is one of the proteins that bind and probably mediate the attachment of the 5S RNA into the large ribosomal subunit, where it forms part of the central protuberance. In the 70S ribosome it contacts protein S13 of the 30S subunit (bridge B1b), connecting the 2 subunits; this bridge is implicated in subunit movement. Contacts the P site tRNA; the 5S rRNA and some of its associated proteins might help stabilize positioning of ribosome-bound tRNAs. The polypeptide is Large ribosomal subunit protein uL5 (Erwinia tasmaniensis (strain DSM 17950 / CFBP 7177 / CIP 109463 / NCPPB 4357 / Et1/99)).